Reading from the N-terminus, the 229-residue chain is Platelet-activating factor acetylhydrolase IB subunit alpha2 (229 aa).

At Ser2 the chain carries N-acetylserine. Ser2 carries the post-translational modification Phosphoserine. Ser48 is a catalytic residue. Position 64 is a phosphoserine (Ser64). Active-site residues include Asp193 and His196. Thr220 carries the post-translational modification Phosphothreonine.

Belongs to the 'GDSL' lipolytic enzyme family. Platelet-activating factor acetylhydrolase IB beta/gamma subunits subfamily. As to quaternary structure, forms a catalytic dimer which is either homodimer (alpha2/alpha2 homodimer) or heterodimer with PAFAH1B3 (alpha2/alpha1 heterodimer). Component of the cytosolic (PAF-AH (I)) heterotetrameric enzyme, which is composed of PAFAH1B1 (beta), PAFAH1B2 (alpha2) and PAFAH1B3 (alpha1) subunits. The catalytic activity of the enzyme resides in the alpha1 (PAFAH1B3) and alpha2 (PAFAH1B2) subunits, whereas the beta subunit (PAFAH1B1) has regulatory activity. Trimer formation is not essential for the catalytic activity. Interacts (homodimer form) with PAFAH1B1 (homodimer form); PAFAH1B2 competes with NDEL1 for PAFAH1B1 binding. Interacts with VLDLR; this interaction may modulate the Reelin pathway.

It localises to the cytoplasm. It carries out the reaction a 1-O-alkyl-2-acetyl-sn-glycero-3-phosphocholine + H2O = a 1-O-alkyl-sn-glycero-3-phosphocholine + acetate + H(+). The enzyme catalyses 1-O-hexadecyl-2-acetyl-sn-glycero-3-phosphocholine + H2O = 1-O-hexadecyl-sn-glycero-3-phosphocholine + acetate + H(+). It catalyses the reaction 1-O-hexadecyl-2-acetyl-sn-glycero-3-phosphate + H2O = 1-O-hexadecyl-sn-glycero-3-phosphate + acetate + H(+). The catalysed reaction is 1-O-hexadecyl-2-acetyl-sn-glycero-3-phosphoethanolamine + H2O = 1-O-hexadecyl-sn-glycero-3-phosphoethanolamine + acetate + H(+). Its activity is regulated as follows. Beta subunit (PAFAH1B1) stimulates the acetylhydrolase activity of the alpha2/alpha2 catalytic homodimer. Alpha2 catalytic subunit of the cytosolic type I platelet-activating factor (PAF) acetylhydrolase (PAF-AH (I)) heterotetrameric enzyme that catalyzes the hydrolyze of the acetyl group at the sn-2 position of PAF and its analogs and modulates the action of PAF. The activity and substrate specificity of PAF-AH (I) are affected by its subunit composition. The alpha2/alpha2 homodimer (PAFAH1B2/PAFAH1B2 homodimer) hydrolyzes PAF and 1-O-alkyl-2-acetyl-sn-glycero-3-phosphorylethanolamine (AAGPE) more efficiently than 1-O-alkyl-2-acetyl-sn-glycero-3-phosphoric acid (AAGPA). In contrast, the alpha1/alpha2 heterodimer(PAFAH1B3/PAFAH1B3 heterodimer) hydrolyzes AAGPA more efficiently than PAF, but has little hydrolytic activity towards AAGPE. May play a role in male germ cell meiosis during the late pachytenestage and meiotic divisions as well as early spermiogenesis. This chain is Platelet-activating factor acetylhydrolase IB subunit alpha2, found in Pongo abelii (Sumatran orangutan).